A 430-amino-acid polypeptide reads, in one-letter code: Serine--tRNA ligase (430 aa).

Residue 235-237 (TSE) participates in L-serine binding. ATP is bound at residue 266–268 (RSE). Glu-289 is an L-serine binding site. ATP is bound at residue 353-356 (EISS). Ser-388 serves as a coordination point for L-serine.

It belongs to the class-II aminoacyl-tRNA synthetase family. Type-1 seryl-tRNA synthetase subfamily. As to quaternary structure, homodimer. The tRNA molecule binds across the dimer.

It is found in the cytoplasm. It carries out the reaction tRNA(Ser) + L-serine + ATP = L-seryl-tRNA(Ser) + AMP + diphosphate + H(+). The enzyme catalyses tRNA(Sec) + L-serine + ATP = L-seryl-tRNA(Sec) + AMP + diphosphate + H(+). The protein operates within aminoacyl-tRNA biosynthesis; selenocysteinyl-tRNA(Sec) biosynthesis; L-seryl-tRNA(Sec) from L-serine and tRNA(Sec): step 1/1. In terms of biological role, catalyzes the attachment of serine to tRNA(Ser). Is also able to aminoacylate tRNA(Sec) with serine, to form the misacylated tRNA L-seryl-tRNA(Sec), which will be further converted into selenocysteinyl-tRNA(Sec). The polypeptide is Serine--tRNA ligase (Azoarcus sp. (strain BH72)).